Reading from the N-terminus, the 283-residue chain is 5'-nucleotidase SurE 2 (283 aa).

Positions 19, 20, 52, and 110 each coordinate a divalent metal cation.

This sequence belongs to the SurE nucleotidase family. Requires a divalent metal cation as cofactor.

The protein resides in the cytoplasm. The enzyme catalyses a ribonucleoside 5'-phosphate + H2O = a ribonucleoside + phosphate. Functionally, nucleotidase that shows phosphatase activity on nucleoside 5'-monophosphates. This is 5'-nucleotidase SurE 2 from Chlamydia caviae (strain ATCC VR-813 / DSM 19441 / 03DC25 / GPIC) (Chlamydophila caviae).